The chain runs to 617 residues: Cytoplasmic polyadenylation element-binding protein 1 (617 aa).

Positions 1–38 are disordered; it reads MQSQLKACGDAPAPSCSLHHRRTISKKPSNGGNSGGGG. RRM domains are found at residues 273–377 and 394–465; these read RKVF…AWRL and RTVF…HADT. Disordered regions lie at residues 534-568 and 592-617; these read DQTR…QNVT and NQNN…AIGY. Over residues 542 to 563 the composition is skewed to basic residues; that stretch reads PPHHSTSHYHHRSTPSHHHNHT.

In terms of assembly, interacts with fbf-1.

In terms of biological role, cytoplasmic polyadenylation element binding protein that binds to and regulates the translation of specific mRNAs. Essential for progression through meiosis. Involved in spermatogenesis. The chain is Cytoplasmic polyadenylation element-binding protein 1 (cpb-1) from Caenorhabditis japonica.